A 158-amino-acid chain; its full sequence is Adenosine 5'-monophosphoramidase HNT1 (158 aa).

In terms of domain architecture, HIT spans Ile26–Leu129. Residues Asp51 to Ile52, Asn103, His109 to Glu111, and His116 to His118 each bind AMP. The Histidine triad motif motif lies at His114–His118. Catalysis depends on His116, which acts as the Tele-AMP-histidine intermediate.

This sequence belongs to the HINT family. Homodimer. Interacts with KIN28. Mg(2+) is required as a cofactor.

It catalyses the reaction adenosine 5'-phosphoramidate + H2O = AMP + NH4(+). Its function is as follows. Hydrolyzes adenosine 5'-monophosphoramidate substrates such as AMP-morpholidate, AMP-N-alanine methyl ester, AMP-alpha-acetyl lysine methyl ester and AMP-NH2. Plays a role in the regulation of kinase KIN28 function. Essential for growth on galactose media at elevated temperatures. This chain is Adenosine 5'-monophosphoramidase HNT1, found in Saccharomyces cerevisiae (strain ATCC 204508 / S288c) (Baker's yeast).